The following is a 273-amino-acid chain: 4-hydroxy-tetrahydrodipicolinate reductase (273 aa).

Residues 12–17 (GAGGRM) and E38 contribute to the NAD(+) site. NADP(+) is bound at residue R39. NAD(+) contacts are provided by residues 102 to 104 (GTT) and 126 to 129 (AANF). Catalysis depends on H159, which acts as the Proton donor/acceptor. H160 is a (S)-2,3,4,5-tetrahydrodipicolinate binding site. The active-site Proton donor is K163. 169–170 (GT) serves as a coordination point for (S)-2,3,4,5-tetrahydrodipicolinate.

This sequence belongs to the DapB family. As to quaternary structure, homotetramer.

It localises to the cytoplasm. The catalysed reaction is (S)-2,3,4,5-tetrahydrodipicolinate + NAD(+) + H2O = (2S,4S)-4-hydroxy-2,3,4,5-tetrahydrodipicolinate + NADH + H(+). The enzyme catalyses (S)-2,3,4,5-tetrahydrodipicolinate + NADP(+) + H2O = (2S,4S)-4-hydroxy-2,3,4,5-tetrahydrodipicolinate + NADPH + H(+). The protein operates within amino-acid biosynthesis; L-lysine biosynthesis via DAP pathway; (S)-tetrahydrodipicolinate from L-aspartate: step 4/4. In terms of biological role, catalyzes the conversion of 4-hydroxy-tetrahydrodipicolinate (HTPA) to tetrahydrodipicolinate. In Salmonella choleraesuis (strain SC-B67), this protein is 4-hydroxy-tetrahydrodipicolinate reductase.